The sequence spans 446 residues: White-opaque regulator 2 (446 aa).

Residues 1–24 (MTQLPSVSELINRTGSIGSSSNIT) are compositionally biased toward polar residues. Residues 1–203 (MTQLPSVSEL…QPNFPYHNNF (203 aa)) are disordered. Residues 30–64 (TTTSATNTTTAATATTVTSTTPRSENSYSPNSPYS) show a composition bias toward low complexity. Positions 67–86 (TRPSNTSLTNYSAGSGITVA) are enriched in polar residues. Low complexity-rich tracts occupy residues 87 to 97 (SSSFQFSQPSP) and 104 to 120 (STSS…QHQS). Residues 121–144 (NPSGVSMSSNTSPRTSIVQSMSSV) show a composition bias toward polar residues. A compositionally biased stretch (pro residues) spans 166–184 (VQPPPQQQQLQQPPPPPPQ). A compositionally biased stretch (low complexity) spans 185-195 (QQQHIYPQQQP). The segment at residues 305 to 332 (CLTCRKRRIKCDERKPTCFNCERSKKSC) is a DNA-binding region (zn(2)-C6 fungal-type). The tract at residues 336-402 (QDLSKLPPRK…SGSSTNSRNL (67 aa)) is disordered. Low complexity predominate over residues 358–369 (NQQQQQQQQNQQ). Residues 387 to 401 (HQITSISGSSTNSRN) are compositionally biased toward polar residues.

It localises to the nucleus. Its function is as follows. Transcriptional regulator of the switch between 2 heritable states, the white and opaque states. These 2 cell types differ in many characteristics, including cell structure, mating competence, and virulence. Each state is heritable for many generations, and switching between states occurs stochastically, at low frequency. WOR2 is necessary for the stability of the opaque state phenotypic switching from the white to the opaque phase is a necessary step for mating. Plays a role in cell adhesion and pseudohyphal growth. The chain is White-opaque regulator 2 (WOR2) from Candida albicans (strain SC5314 / ATCC MYA-2876) (Yeast).